The chain runs to 497 residues: Dihydrolipoyl dehydrogenase (497 aa).

Residues 60 to 69, Lys-78, Gly-142, and 170 to 172 contribute to the FAD site; these read EKEPSLGGTC and TGS. Cys-69 and Cys-74 form a disulfide bridge. NAD(+) contacts are provided by residues 207–214, Glu-230, Val-264, and Gly-302; that span reads GAGVIGLE. FAD-binding positions include Asp-343 and 349–352; that span reads MLAH. The Proton acceptor role is filled by His-475.

The protein belongs to the class-I pyridine nucleotide-disulfide oxidoreductase family. As to quaternary structure, homodimer. Requires FAD as cofactor.

Its subcellular location is the cytoplasm. The catalysed reaction is N(6)-[(R)-dihydrolipoyl]-L-lysyl-[protein] + NAD(+) = N(6)-[(R)-lipoyl]-L-lysyl-[protein] + NADH + H(+). The polypeptide is Dihydrolipoyl dehydrogenase (Manduca sexta (Tobacco hawkmoth)).